The chain runs to 2197 residues: uncharacterized protein (2197 aa).

The residue at position 2 (Ser-2) is an N-acetylserine. Residues 2159 to 2195 form an HEAT repeat; that stretch reads TIPFLAELLEDVELSVKSLAQDIIKQMEEMSGESLAE.

The protein belongs to the HEATR1/UTP10 family.

It is found in the nucleus. Its subcellular location is the nucleolus. In terms of biological role, involved in nucleolar processing of pre-18S ribosomal RNA. Involved in ribosome biosynthesis. This is an uncharacterized protein from Arabidopsis thaliana (Mouse-ear cress).